We begin with the raw amino-acid sequence, 569 residues long: Urease subunit alpha (569 aa).

Residues His-136, His-138, and Lys-219 each coordinate Ni(2+). At Lys-219 the chain carries N6-carboxylysine. His-221 contributes to the substrate binding site. Residues His-248 and His-274 each coordinate Ni(2+). His-322 serves as the catalytic Proton donor. Asp-362 serves as a coordination point for Ni(2+).

This sequence belongs to the metallo-dependent hydrolases superfamily. Urease alpha subunit family. As to quaternary structure, heterotrimer of UreA (gamma), UreB (beta) and UreC (alpha) subunits. Three heterotrimers associate to form the active enzyme. It depends on Ni cation as a cofactor. Post-translationally, carboxylation allows a single lysine to coordinate two nickel ions.

It localises to the cytoplasm. It carries out the reaction urea + 2 H2O + H(+) = hydrogencarbonate + 2 NH4(+). It functions in the pathway nitrogen metabolism; urea degradation; CO(2) and NH(3) from urea (urease route): step 1/1. The sequence is that of Urease subunit alpha from Microcystis aeruginosa (strain NIES-843 / IAM M-2473).